Here is a 205-residue protein sequence, read N- to C-terminus: Glycerol-3-phosphate acyltransferase (205 aa).

At 1–3 the chain is on the periplasmic side; it reads MSA. The chain crosses the membrane as a helical span at residues 4–24; sequence IAPGMILIAYLCGSISSAILV. Residues 25-52 lie on the Cytoplasmic side of the membrane; sequence CRLCGLPDPRTSGSGNPGATNVLRIGGK. Residues 53–73 form a helical membrane-spanning segment; it reads GAAVAVLIFDVLKGMLPVWGA. Residues 74 to 80 are Periplasmic-facing; that stretch reads YELGVSP. Residues 81–101 traverse the membrane as a helical segment; sequence FWLGLIAIAACLGHIWPVFFG. The Cytoplasmic segment spans residues 102–111; the sequence is FKGGKGVATA. Residues 112 to 132 traverse the membrane as a helical segment; that stretch reads FGAIAPIGWDLTGVMAGTWLL. The Periplasmic portion of the chain corresponds to 133–137; that stretch reads TVLLS. The helical transmembrane segment at 138–158 threads the bilayer; that stretch reads GYSSLGAIVSALIAPFYVWWF. Residues 159–205 are Cytoplasmic-facing; sequence KPQFTFPVSMLSCLILLRHHDNIQRLWRRQETKIWTKFKRKREKDPE.

The protein belongs to the PlsY family. In terms of assembly, probably interacts with PlsX.

The protein resides in the cell inner membrane. The catalysed reaction is sn-glycerol 3-phosphate + an acyl-CoA = a 1-acyl-sn-glycero-3-phosphate + CoA. The enzyme catalyses a fatty acyl-[ACP] + sn-glycerol 3-phosphate = a 1-acyl-sn-glycero-3-phosphate + holo-[ACP]. It participates in lipid metabolism; phospholipid metabolism. Functionally, catalyzes the transfer of an acyl group from acyl-ACP to glycerol-3-phosphate (G3P) to form lysophosphatidic acid (LPA). This enzyme can also utilize acyl-CoA as fatty acyl donor, but not acyl-PO(4). This chain is Glycerol-3-phosphate acyltransferase, found in Escherichia coli O8 (strain IAI1).